Consider the following 317-residue polypeptide: Large ribosomal subunit protein uL10 (317 aa).

The segment covering 280-290 (SASAAPAAGGA) has biased composition (low complexity). A disordered region spans residues 280–317 (SASAAPAAGGATEKKEEAKKPESESEEEDDDMGFGLFD). Positions 291–302 (TEKKEEAKKPES) are enriched in basic and acidic residues. At Ser-302 the chain carries Phosphoserine. Ser-304 is modified (phosphoserine; by CK1).

This sequence belongs to the universal ribosomal protein uL10 family. As to quaternary structure, P0 forms a pentameric complex by interaction with dimers of P1 and P2.

The protein resides in the cytoplasm. The protein localises to the nucleus. Ribosomal protein P0 is the functional equivalent of E.coli protein L10. The chain is Large ribosomal subunit protein uL10 (RpLP0) from Drosophila melanogaster (Fruit fly).